The chain runs to 140 residues: Putative nickel-responsive regulator (140 aa).

Ni(2+) is bound by residues His76, His87, His89, and Cys95.

This sequence belongs to the transcriptional regulatory CopG/NikR family. Ni(2+) serves as cofactor.

Its function is as follows. Transcriptional regulator. This is Putative nickel-responsive regulator from Rhodopseudomonas palustris (strain BisB5).